Reading from the N-terminus, the 217-residue chain is tRNA 5-hydroxyuridine methyltransferase (217 aa).

Residues Met-38, Ser-68, Glu-85, 113 to 114, and Asp-133 contribute to the S-adenosyl-L-methionine site; that span reads DA. 3 residues coordinate Mg(2+): Asp-133, Asp-159, and Asn-160.

It belongs to the class I-like SAM-binding methyltransferase superfamily. Cation-dependent O-methyltransferase family. In terms of assembly, homodimer.

The enzyme catalyses 5-hydroxyuridine(34) in tRNA + S-adenosyl-L-methionine = 5-methoxyuridine(34) in tRNA + S-adenosyl-L-homocysteine + H(+). Catalyzes the methylation of 5-hydroxyuridine (ho5U) to form 5-methoxyuridine (mo5U) at position 34 in tRNAs. This chain is tRNA 5-hydroxyuridine methyltransferase, found in Bacillus subtilis (strain 168).